We begin with the raw amino-acid sequence, 57 residues long: Protein GnsA (57 aa).

This sequence belongs to the gns family.

This Escherichia coli O6:H1 (strain CFT073 / ATCC 700928 / UPEC) protein is Protein GnsA (gnsA).